The sequence spans 197 residues: NADH-quinone oxidoreductase subunit C (197 aa).

The protein belongs to the complex I 30 kDa subunit family. As to quaternary structure, NDH-1 is composed of 14 different subunits. Subunits NuoB, C, D, E, F, and G constitute the peripheral sector of the complex.

Its subcellular location is the cell inner membrane. It carries out the reaction a quinone + NADH + 5 H(+)(in) = a quinol + NAD(+) + 4 H(+)(out). Its function is as follows. NDH-1 shuttles electrons from NADH, via FMN and iron-sulfur (Fe-S) centers, to quinones in the respiratory chain. The immediate electron acceptor for the enzyme in this species is believed to be ubiquinone. Couples the redox reaction to proton translocation (for every two electrons transferred, four hydrogen ions are translocated across the cytoplasmic membrane), and thus conserves the redox energy in a proton gradient. The chain is NADH-quinone oxidoreductase subunit C from Neisseria meningitidis serogroup C (strain 053442).